A 138-amino-acid polypeptide reads, in one-letter code: Putative esterase HI_1161 (138 aa).

The protein belongs to the thioesterase PaaI family.

In Haemophilus influenzae (strain ATCC 51907 / DSM 11121 / KW20 / Rd), this protein is Putative esterase HI_1161.